The following is an 85-amino-acid chain: Small ribosomal subunit protein bS16c (85 aa).

The protein belongs to the bacterial ribosomal protein bS16 family.

Its subcellular location is the plastid. The protein localises to the chloroplast. The chain is Small ribosomal subunit protein bS16c from Oryza nivara (Indian wild rice).